A 521-amino-acid chain; its full sequence is Glutamyl-tRNA(Gln) amidotransferase subunit B, mitochondrial (521 aa).

A mitochondrion-targeting transit peptide spans Met-1–Phe-22.

This sequence belongs to the GatB/GatE family. GatB subfamily. As to quaternary structure, subunit of the heterotrimeric GatCAB amidotransferase (AdT) complex, composed of A, B and C subunits.

It localises to the mitochondrion. The catalysed reaction is L-glutamyl-tRNA(Gln) + L-glutamine + ATP + H2O = L-glutaminyl-tRNA(Gln) + L-glutamate + ADP + phosphate + H(+). Its function is as follows. Allows the formation of correctly charged Gln-tRNA(Gln) through the transamidation of misacylated Glu-tRNA(Gln) in the mitochondria. The reaction takes place in the presence of glutamine and ATP through an activated gamma-phospho-Glu-tRNA(Gln). The chain is Glutamyl-tRNA(Gln) amidotransferase subunit B, mitochondrial from Cryptococcus neoformans var. neoformans serotype D (strain JEC21 / ATCC MYA-565) (Filobasidiella neoformans).